The chain runs to 45 residues: Metallothionein-like protein 1A (45 aa).

The protein belongs to the metallothionein superfamily. Type 15 family. As to expression, expressed in phloem and mesophyll cells of leaves, vascular tissues of cotyledons, sepals and petals. Expressed in anthers. Expressed in root endodermis and at lower levels in cortex of mature region of roots.

Its function is as follows. Metallothioneins have a high content of cysteine residues that bind various heavy metals. Functions as a metal chelator of copper (Cu) and zinc (Zn). Plays a role in Cu homeostasis in the roots under elevated Cu concentration. Functions cooperatively with the phytochelatin synthase PCS1 to protect plants from Cu and cadmium (Cd) toxicity. Plays a role in Cu homeostasis, specifically in the remobilization of Cu from senescing leaves. The mobilization of Cu from internal sources is important for seed development. Confers tolerance to Cd and plays a role in Cd and Zn homeostasis. In Arabidopsis thaliana (Mouse-ear cress), this protein is Metallothionein-like protein 1A (MT1A).